Consider the following 170-residue polypeptide: Tubulin polymerization-promoting protein family member 2 (170 aa).

Positions 105-117 (TTGVTKSTTVGGV) are enriched in low complexity. A disordered region spans residues 105 to 170 (TTGVTKSTTV…GAGTYDKKNQ (66 aa)). Residues 129-149 (THKERFDESGKGKGIEGREET) show a composition bias toward basic and acidic residues.

The protein belongs to the TPPP family. As to expression, only expressed in male reproductive organs, including testis. Expressed in elongating spermatids at stages IV-VIII of the seminiferous epithelial cycle in testis and in mature sperm in the epididymis.

It is found in the cytoplasm. The protein localises to the cytosol. The protein resides in the cell projection. It localises to the cilium. Its subcellular location is the flagellum. Probable regulator of microtubule dynamics required for sperm motility. In contrast to other members of the family, has no microtubule bundling activity. This is Tubulin polymerization-promoting protein family member 2 from Mus musculus (Mouse).